A 156-amino-acid polypeptide reads, in one-letter code: Ribosome maturation factor RimP (156 aa).

It belongs to the RimP family.

The protein localises to the cytoplasm. In terms of biological role, required for maturation of 30S ribosomal subunits. The sequence is that of Ribosome maturation factor RimP from Dictyoglomus thermophilum (strain ATCC 35947 / DSM 3960 / H-6-12).